Here is a 261-residue protein sequence, read N- to C-terminus: tRNA 5-carboxymethoxyuridine methyltransferase (261 aa).

S-adenosyl-L-methionine contacts are provided by residues arginine 26, 52 to 53 (GG), aspartate 73, 102 to 103 (AQ), and histidine 119.

Belongs to the class I-like SAM-binding methyltransferase superfamily. CmoM family. In terms of assembly, homodimer.

The catalysed reaction is 5-carboxymethoxyuridine(34) in tRNA + S-adenosyl-L-methionine = 5-methoxycarbonylmethoxyuridine(34) in tRNA + S-adenosyl-L-homocysteine. Catalyzes the methylation of 5-carboxymethoxyuridine (cmo5U) to form 5-methoxycarbonylmethoxyuridine (mcmo5U) at position 34 in tRNAs. In Escherichia coli O157:H7, this protein is tRNA 5-carboxymethoxyuridine methyltransferase.